The following is a 144-amino-acid chain: Small ribosomal subunit protein uS12 (144 aa).

A 3-methylthioaspartic acid modification is found at Asp-103. The segment at 121 to 144 (VANRKQGRSKYGTKKASAVPAKKK) is disordered.

The protein belongs to the universal ribosomal protein uS12 family. As to quaternary structure, part of the 30S ribosomal subunit. Contacts proteins S8 and S17. May interact with IF1 in the 30S initiation complex.

Its function is as follows. With S4 and S5 plays an important role in translational accuracy. Functionally, interacts with and stabilizes bases of the 16S rRNA that are involved in tRNA selection in the A site and with the mRNA backbone. Located at the interface of the 30S and 50S subunits, it traverses the body of the 30S subunit contacting proteins on the other side and probably holding the rRNA structure together. The combined cluster of proteins S8, S12 and S17 appears to hold together the shoulder and platform of the 30S subunit. This Roseiflexus castenholzii (strain DSM 13941 / HLO8) protein is Small ribosomal subunit protein uS12.